Reading from the N-terminus, the 466-residue chain is DNA repair protein RadA (466 aa).

Residues 12–29 (CSECQHVAPKWVGRCANC) form a C4-type zinc finger. 100–107 (GDPGVGKS) provides a ligand contact to ATP. Residues 261-265 (KNRFG) carry the RadA KNRFG motif motif. Residues 359-466 (DLYLSTVGGM…MREIAIAGAQ (108 aa)) are lon-protease-like.

This sequence belongs to the RecA family. RadA subfamily. In terms of assembly, interacts with DisA.

In terms of biological role, DNA-dependent ATPase involved in processing of recombination intermediates, plays a role in repairing DNA breaks. Stimulates the branch migration of RecA-mediated strand transfer reactions, allowing the 3' invading strand to extend heteroduplex DNA faster. Binds ssDNA in the presence of ADP but not other nucleotides, has ATPase activity that is stimulated by ssDNA and various branched DNA structures, but inhibited by SSB. Does not have RecA's homology-searching function. Also inhibits the diadenylate cyclase activity of DisA. This is DNA repair protein RadA from Mycolicibacterium smegmatis (strain ATCC 700084 / mc(2)155) (Mycobacterium smegmatis).